A 508-amino-acid polypeptide reads, in one-letter code: Drug efflux pump JefA (508 aa).

A run of 14 helical transmembrane segments spans residues 9–29, 46–66, 75–95, 104–124, 136–156, 163–183, 194–214, 222–242, 265–285, 297–317, 328–348, 354–374, 399–419, and 479–499; these read VLATGLGIFMVFVDVNIVNVA, WAVAGYSLGMAAVLMSCALLG, FVFGVTLFVVSSIVCVLPVSL, IQGLGAAFISVLSLALLSHSF, NWMAIGMVGAASAPALGGLMV, SVFLVNVPLGAIVWLLTLVGV, LDWVGQLTLIPAVALIAYTII, QSAGFVAALLLAAGVLLWLFV, SVLIVYFVVMSCFFGTLMVIT, LHAGLMMLPVPAGFGVASLLA, LPVLTCLAAMFIGLAIFAISM, VALVGLTIFGAGAGGCATPLL, LGGIFGVAFLGTIVAAWLGAA, and GIKLALGGAAVLLTGAFVLGW.

This sequence belongs to the major facilitator superfamily.

Its subcellular location is the cell inner membrane. In terms of biological role, involved in resistance to ethambutol and isoniazid. In Mycobacterium tuberculosis (strain CDC 1551 / Oshkosh), this protein is Drug efflux pump JefA.